Here is a 327-residue protein sequence, read N- to C-terminus: Zinc transport protein ZntB (327 aa).

Topologically, residues 1–271 (MESFAGKELQ…AMNRRTYTMS (271 aa)) are cytoplasmic. Residues 272 to 292 (LLAMVFLPTTFLTGLFGVNLG) traverse the membrane as a helical segment. Residues 293–300 (GIPGGDAP) lie on the Periplasmic side of the membrane. The helical transmembrane segment at 301 to 321 (FGFFTFCLMLVILVGGVAWWL) threads the bilayer. Residues 322-327 (KRSKWL) are Cytoplasmic-facing.

It belongs to the CorA metal ion transporter (MIT) (TC 1.A.35) family.

It is found in the cell inner membrane. The catalysed reaction is Zn(2+)(out) + H(+)(out) = Zn(2+)(in) + H(+)(in). In terms of biological role, zinc transporter. Acts as a Zn(2+):proton symporter, which likely mediates zinc ion uptake. This Pectobacterium atrosepticum (strain SCRI 1043 / ATCC BAA-672) (Erwinia carotovora subsp. atroseptica) protein is Zinc transport protein ZntB.